Here is a 94-residue protein sequence, read N- to C-terminus: Putative pterin-4-alpha-carbinolamine dehydratase (94 aa).

The protein belongs to the pterin-4-alpha-carbinolamine dehydratase family.

It carries out the reaction (4aS,6R)-4a-hydroxy-L-erythro-5,6,7,8-tetrahydrobiopterin = (6R)-L-erythro-6,7-dihydrobiopterin + H2O. The chain is Putative pterin-4-alpha-carbinolamine dehydratase from Mycobacterium avium (strain 104).